Consider the following 201-residue polypeptide: Orotate phosphoribosyltransferase (201 aa).

113–121 (EDIITTGKS) is a binding site for 5-phospho-alpha-D-ribose 1-diphosphate. Orotate contacts are provided by threonine 117 and arginine 145.

Belongs to the purine/pyrimidine phosphoribosyltransferase family. PyrE subfamily. Homodimer. Requires Mg(2+) as cofactor.

The catalysed reaction is orotidine 5'-phosphate + diphosphate = orotate + 5-phospho-alpha-D-ribose 1-diphosphate. The protein operates within pyrimidine metabolism; UMP biosynthesis via de novo pathway; UMP from orotate: step 1/2. Catalyzes the transfer of a ribosyl phosphate group from 5-phosphoribose 1-diphosphate to orotate, leading to the formation of orotidine monophosphate (OMP). This Helicobacter pylori (strain Shi470) protein is Orotate phosphoribosyltransferase.